We begin with the raw amino-acid sequence, 280 residues long: Divalent cation/proton antiporter GDT1 (280 aa).

Residues M1–N3 are Cytoplasmic-facing. The helical transmembrane segment at M4–A24 threads the bilayer. Over T25–S45 the chain is Vacuolar. Residues V46 to A66 form a helical membrane-spanning segment. The Cytoplasmic segment spans residues M67–R71. A helical transmembrane segment spans residues V72–V92. At G93–Y104 the chain is on the vacuolar side. Residues T105–L125 form a helical membrane-spanning segment. Topologically, residues E126 to E183 are cytoplasmic. Residues L184 to E204 form a helical membrane-spanning segment. The Vacuolar segment spans residues L205–Y222. Residues W223–G243 traverse the membrane as a helical segment. Residues G244–T255 are Cytoplasmic-facing. Residues I256–F276 traverse the membrane as a helical segment. Over T277–D280 the chain is Vacuolar.

This sequence belongs to the GDT1 family.

The protein resides in the golgi apparatus. It localises to the cis-Golgi network membrane. It catalyses the reaction Ca(2+)(in) + n H(+)(out) = Ca(2+)(out) + n H(+)(in). The enzyme catalyses Mn(2+)(in) + n H(+)(out) = Mn(2+)(out) + n H(+)(in). Functionally, divalent cation:proton antiporter that exchanges calcium or manganese ions for protons across the Golgi membrane. Mediates the reversible transport of calcium or manganese to the Golgi lumen driven by the proton gradient and possibly the membrane potential generated by V-ATPase. Provides calcium or manganese cofactors to resident Golgi enzymes and contributes to the maintenance of an acidic luminal Golgi pH required for proper functioning of the secretory pathway. The transport stoichiometry remains to be elucidated. The chain is Divalent cation/proton antiporter GDT1 from Saccharomyces cerevisiae (strain ATCC 204508 / S288c) (Baker's yeast).